Reading from the N-terminus, the 224-residue chain is Claudin-17 (224 aa).

Residues 1–7 are Cytoplasmic-facing; that stretch reads MAFYPLQ. The chain crosses the membrane as a helical span at residues 8–28; sequence IAGLVLGFFGLVGTIGTTLLP. Over 29–81 the chain is Extracellular; that stretch reads QWRVSAFIGSNIIIFERIWEGLWMNCIQQAMVTLQCKFYNSILALPPVLEAAR. A helical transmembrane segment spans residues 82 to 102; it reads ALMCVAVALALVALIIGICGM. Residues 103–124 lie on the Cytoplasmic side of the membrane; sequence KQLQCTGSSERVKAYLLGTSGV. A helical membrane pass occupies residues 125–145; sequence LFILTGIFVLIPVSWTANIII. Residues 146–164 lie on the Extracellular side of the membrane; the sequence is RDFYDPTVHAGQKRELGGA. Residues 165 to 185 traverse the membrane as a helical segment; sequence LFLGWATAAVLFIGGGLLCGY. The Cytoplasmic portion of the chain corresponds to 186 to 224; the sequence is CCCNRKERWHRYPVPAYRVPQKDNQRNVTVPRKSSTSYV.

This sequence belongs to the claudin family. Does not form homotypic polymeric strands and it is not sufficient to form tight junctions by its own. Interacts with OCLN. Expressed at high levels in the kidney and at mucher lower levels in the brain. In the kidney, expression gradually decreases from the proximal tubule downstream to the distal convoluted tubule. Expressed in the thin ascending limb of Henle's loop, as well as in the thick ascending limb of Henle's loop. In the distal convoluted tubules, expressed only in a few tubules. Not detected in the collecting duct. In the brain, expressed in blood vessels (at protein level).

Its subcellular location is the cell junction. The protein localises to the tight junction. It localises to the cell membrane. It catalyses the reaction chloride(in) = chloride(out). The enzyme catalyses hydrogencarbonate(in) = hydrogencarbonate(out). The catalysed reaction is bromide(in) = bromide(out). It carries out the reaction iodide(out) = iodide(in). It catalyses the reaction fluoride(in) = fluoride(out). The enzyme catalyses nitrate(in) = nitrate(out). The catalysed reaction is thiocyanate(in) = thiocyanate(out). Functionally, channel-forming tight junction protein with selectivity for anions, including chloride and hydrogencarbonate, and for solutes smaller than 9 Angstrom in diameter. In the kidney proximal tubule, may be involved in quantitative reabsorption of filtered anions. Does not affect water permeability. In Mus musculus (Mouse), this protein is Claudin-17 (Cldn17).